Here is a 243-residue protein sequence, read N- to C-terminus: Small ribosomal subunit protein uS3 (243 aa).

A KH type-2 domain is found at 39–110 (IRTFIQKKYG…QVRINVVEVE (72 aa)). The disordered stretch occupies residues 216–243 (KTIPVGASPKRKAGRRPQQFEDRSNENS). Residues 233-243 (QQFEDRSNENS) are compositionally biased toward basic and acidic residues.

The protein belongs to the universal ribosomal protein uS3 family. In terms of assembly, part of the 30S ribosomal subunit. Forms a tight complex with proteins S10 and S14.

In terms of biological role, binds the lower part of the 30S subunit head. Binds mRNA in the 70S ribosome, positioning it for translation. The sequence is that of Small ribosomal subunit protein uS3 from Prochlorococcus marinus (strain MIT 9312).